A 101-amino-acid polypeptide reads, in one-letter code: Small ribosomal subunit protein uS14 (101 aa).

Belongs to the universal ribosomal protein uS14 family. Part of the 30S ribosomal subunit. Contacts proteins S3 and S10.

In terms of biological role, binds 16S rRNA, required for the assembly of 30S particles and may also be responsible for determining the conformation of the 16S rRNA at the A site. This is Small ribosomal subunit protein uS14 from Polynucleobacter necessarius subsp. necessarius (strain STIR1).